Here is a 242-residue protein sequence, read N- to C-terminus: ATP-dependent dethiobiotin synthetase BioD (242 aa).

An ATP-binding site is contributed by E12–V17. T16 contacts Mg(2+). Residue K37 is part of the active site. S41 serves as a coordination point for substrate. ATP is bound by residues D51 and E112–G115. Mg(2+) is bound by residues D51 and E112.

Belongs to the dethiobiotin synthetase family. In terms of assembly, homodimer. Mg(2+) serves as cofactor.

The protein localises to the cytoplasm. It carries out the reaction (7R,8S)-7,8-diammoniononanoate + CO2 + ATP = (4R,5S)-dethiobiotin + ADP + phosphate + 3 H(+). It participates in cofactor biosynthesis; biotin biosynthesis; biotin from 7,8-diaminononanoate: step 1/2. In terms of biological role, catalyzes a mechanistically unusual reaction, the ATP-dependent insertion of CO2 between the N7 and N8 nitrogen atoms of 7,8-diaminopelargonic acid (DAPA, also called 7,8-diammoniononanoate) to form a ureido ring. This chain is ATP-dependent dethiobiotin synthetase BioD, found in Bacillus thuringiensis (strain Al Hakam).